The primary structure comprises 283 residues: tRNA pseudouridine synthase B (283 aa).

Asp38 functions as the Nucleophile in the catalytic mechanism.

This sequence belongs to the pseudouridine synthase TruB family. Type 1 subfamily.

It catalyses the reaction uridine(55) in tRNA = pseudouridine(55) in tRNA. Its function is as follows. Responsible for synthesis of pseudouridine from uracil-55 in the psi GC loop of transfer RNAs. This is tRNA pseudouridine synthase B from Aster yellows witches'-broom phytoplasma (strain AYWB).